Reading from the N-terminus, the 632-residue chain is Chaperone protein HtpG (632 aa).

Residues 1-343 (MSEQTINNKE…SNDLALNVSR (343 aa)) form an a; substrate-binding region. The b stretch occupies residues 344 to 560 (EILQDNKVTQ…DFEMGTQMAK (217 aa)). Positions 561–632 (LLEAAGQAAP…LSAMNQLLSK (72 aa)) are c.

The protein belongs to the heat shock protein 90 family. Homodimer.

It localises to the cytoplasm. In terms of biological role, molecular chaperone. Has ATPase activity. The sequence is that of Chaperone protein HtpG from Aliivibrio salmonicida (strain LFI1238) (Vibrio salmonicida (strain LFI1238)).